The following is a 162-amino-acid chain: Scytalone dehydratase-like protein claB (162 aa).

Y48 provides a ligand contact to substrate. Residues H83 and H108 contribute to the active site.

Belongs to the scytalone dehydratase family.

It functions in the pathway pigment biosynthesis. Scytalone dehydratase-like protein; part of the gene cluster that mediates the biosynthesis of the bianthraquinone cladofulvin, a conidial pigment not required for virulence but that plays a role in fitness and resistance to environmental stresses including UV light and low-temperature stress. The pathway begins with the synthesis of atrochrysone thioester by the polyketide synthase (PKS) claG. The atrochrysone carboxyl ACP thioesterase claF then breaks the thioester bond and releases the atrochrysone carboxylic acid from claG. This compound is decarboxylated by claH to yield emodin, which is further converted to chrysophanol hydroquinone by the reductase claC and the dehydratase claB. The cytochrome P450 monooxygenase claM then catalyzes the dimerization of nataloe-emodin to cladofulvin. The protein is Scytalone dehydratase-like protein claB of Passalora fulva (Tomato leaf mold).